The following is a 251-amino-acid chain: Insulin-induced gene 1 protein (251 aa).

Topologically, residues 1–58 (MPRLEEHCWSCSCSTSVKTKDLSSAGWIVCKTGEMMSIITSVLSHAYGSLHSLQSANL) are cytoplasmic. A helical membrane pass occupies residues 59 to 81 (IRRGLVLFIVGVVLALVLNLLQI). Residues 82-100 (QRNVTLFPEEVLDTLFSSA) are Extracellular-facing. Residues 101-118 (WWIPLCCGTAAAVVGLLY) form a helical membrane-spanning segment. Residues 119-133 (PCLDHHLGEPHKFKR) are Cytoplasmic-facing. Residues 134-156 (EWASVMRCIAVFVGINHASAKLD) traverse the membrane as a helical segment. Residues 157 to 159 (FAN) are Extracellular-facing. A helical transmembrane segment spans residues 160-178 (NVQLSLTLAALSLGLWWTF). Residues 179–183 (DRSRS) are Cytoplasmic-facing. The chain crosses the membrane as a helical span at residues 184 to 205 (GFGLGLTTALLATLIAQLLVYN). The Extracellular portion of the chain corresponds to 206–219 (GIYQYTSPDFLYVR). A helical transmembrane segment spans residues 220–237 (SWLPCIFFSGGVTVGNIG). Topologically, residues 238–251 (RQLAMGSTEKIHND) are cytoplasmic. The KxHxx signature appears at 245–251 (TEKIHND).

Belongs to the INSIG family. In terms of assembly, interacts with scap; interaction is direct and only takes place in the presence of sterols; it prevents interaction between scap and the coat protein complex II (COPII). Associates with the SCAP-SREBP complex; association is mediated via its interaction with scap and only takes place in the presence of sterols.

The protein localises to the endoplasmic reticulum membrane. In terms of biological role, oxysterol-binding protein that mediates feedback control of cholesterol synthesis by controlling both endoplasmic reticulum to Golgi transport of scap and degradation of hmgcr. Acts as a negative regulator of cholesterol biosynthesis by mediating the retention of the SCAP-SREBP complex in the endoplasmic reticulum, thereby blocking the processing of sterol regulatory element-binding proteins (SREBPs). Binds oxysterol, including 25-hydroxycholesterol, regulating interaction with scap and retention of the SCAP-SREBP complex in the endoplasmic reticulum. In presence of oxysterol, interacts with scap, retaining the SCAP-SREBP complex in the endoplasmic reticulum, thereby preventing scap from escorting SREBPs to the Golgi. Sterol deprivation reduces oxysterol-binding, disrupting the interaction between insig1 and scap, thereby promoting Golgi transport of the SCAP-SREBP complex, followed by processing and nuclear translocation of SREBPs. Also regulates cholesterol synthesis by regulating degradation of hmgcr. This chain is Insulin-induced gene 1 protein, found in Danio rerio (Zebrafish).